The following is a 466-amino-acid chain: UDP-N-acetylmuramoylalanine--D-glutamate ligase (466 aa).

Position 115–121 (115–121) interacts with ATP; sequence GTDGKTT.

Belongs to the MurCDEF family.

The protein localises to the cytoplasm. It catalyses the reaction UDP-N-acetyl-alpha-D-muramoyl-L-alanine + D-glutamate + ATP = UDP-N-acetyl-alpha-D-muramoyl-L-alanyl-D-glutamate + ADP + phosphate + H(+). It functions in the pathway cell wall biogenesis; peptidoglycan biosynthesis. Its function is as follows. Cell wall formation. Catalyzes the addition of glutamate to the nucleotide precursor UDP-N-acetylmuramoyl-L-alanine (UMA). The sequence is that of UDP-N-acetylmuramoylalanine--D-glutamate ligase from Chlorobium phaeobacteroides (strain BS1).